The chain runs to 45 residues: Large ribosomal subunit protein bL34 (45 aa).

This sequence belongs to the bacterial ribosomal protein bL34 family.

The chain is Large ribosomal subunit protein bL34 from Salinispora arenicola (strain CNS-205).